An 85-amino-acid chain; its full sequence is Contulakin-Lt1 (85 aa).

Residues 1-22 (MRTAYWVMVMMMVGITAPLSEG) form the signal peptide. Residues 23–60 (RKLNDAIRGLVADYLTPQLLQSLVSAPYPEFQLDDPNL) constitute a propeptide that is removed on maturation. Cys-65 and Cys-70 are disulfide-bonded. A propeptide spanning residues 76-85 (RRRDLKKRNK) is cleaved from the precursor.

The protein belongs to the conotoxin C superfamily. In terms of tissue distribution, expressed by the venom duct.

Its subcellular location is the secreted. Acts as an agonist of neurotensin receptors. It binds to human neurotensin type 1 receptor (NTSR1), rat neurotensin types 1 and 2 receptors (NTSR1/NTSR2) and mouse neurotensin type 3 receptor (SORT1). This Conus litteratus (Lettered cone) protein is Contulakin-Lt1.